A 160-amino-acid chain; its full sequence is Transcription elongation factor GreA (160 aa).

A coiled-coil region spans residues 10–37; that stretch reads TLDGKAKLENELQELKTVKRKEVVERIK.

This sequence belongs to the GreA/GreB family.

Its function is as follows. Necessary for efficient RNA polymerase transcription elongation past template-encoded arresting sites. The arresting sites in DNA have the property of trapping a certain fraction of elongating RNA polymerases that pass through, resulting in locked ternary complexes. Cleavage of the nascent transcript by cleavage factors such as GreA or GreB allows the resumption of elongation from the new 3'terminus. GreA releases sequences of 2 to 3 nucleotides. This chain is Transcription elongation factor GreA, found in Listeria innocua serovar 6a (strain ATCC BAA-680 / CLIP 11262).